A 318-amino-acid polypeptide reads, in one-letter code: cAMP/cGMP dual specificity phosphodiesterase MT0825 (318 aa).

3 residues coordinate Fe cation: Asp21, His23, and Asp63. Residues His23, Asp63, and 97-98 (NH) each bind AMP. Mn(2+) contacts are provided by Asp63, Asn97, His169, and His207. His209 contacts Fe cation. AMP is bound at residue His209. Residues 278–318 (PGQARRKIAESGIFIEPSRRDSLFKHPPMVLTSSAPRSPVD) form a C-terminal extension region.

Belongs to the cyclic nucleotide phosphodiesterase class-III family. As to quaternary structure, homodimer. Fe(3+) serves as cofactor. The cofactor is Mn(2+).

The protein resides in the cytoplasm. It localises to the cell membrane. The protein localises to the secreted. It is found in the cell wall. Its subcellular location is the cell envelope. The catalysed reaction is a nucleoside 2',3'-cyclic phosphate + H2O = a nucleoside 3'-phosphate + H(+). It catalyses the reaction 2',3'-cyclophospho-AMP + H2O = 3'-AMP + H(+). It carries out the reaction 2',3'-cyclophospho-GMP + H2O = 3'-GMP + H(+). The enzyme catalyses a nucleoside 3',5'-cyclic phosphate + H2O = a nucleoside 5'-phosphate + H(+). The catalysed reaction is 3',5'-cyclic AMP + H2O = AMP + H(+). It catalyses the reaction 3',5'-cyclic GMP + H2O = GMP + H(+). Its function is as follows. Cyclic nucleotide phosphodiesterase with a dual-specificity for the second messengers cAMP and cGMP. The polypeptide is cAMP/cGMP dual specificity phosphodiesterase MT0825 (Mycobacterium tuberculosis (strain CDC 1551 / Oshkosh)).